The sequence spans 414 residues: Snake venom metalloproteinase atrolysin-D (414 aa).

The N-terminal stretch at 1–20 is a signal peptide; sequence MIEVLLVTICLAVFPYQGSS. The propeptide occupies 21–190; that stretch reads IILESGNVND…KASDLNLNPD (170 aa). Gln-191 is subject to Pyrrolidone carboxylic acid. Residues 197 to 393 form the Peptidase M12B domain; it reads RYIELVVVAD…YKPQCILNKP (197 aa). Ca(2+) is bound by residues Glu-200 and Asp-284. Cystine bridges form between Cys-308–Cys-388 and Cys-348–Cys-355. His-333 provides a ligand contact to Zn(2+). The active site involves Glu-334. His-337 and His-343 together coordinate Zn(2+). Positions 388 and 391 each coordinate Ca(2+). A propeptide spanning residues 394-414 is cleaved from the precursor; that stretch reads LRIDPVSTPVSGNELLEAGEE.

This sequence belongs to the venom metalloproteinase (M12B) family. P-I subfamily. As to quaternary structure, monomer. The cofactor is Zn(2+). Post-translationally, the N-terminus is blocked. In terms of tissue distribution, expressed by the venom gland.

It localises to the secreted. The catalysed reaction is Cleavage of 5-His-|-Leu-6, 10-His-|-Leu-11, 14-Ala-|-Leu-15, 16-Tyr-|-Leu-17 and 23-Gly-|-Phe-24 of insulin B chain. With small molecule substrates prefers hydrophobic residue at P2' and small residue such as Ala, Gly at P1.. Snake venom zinc metalloproteinase that causes hemorrhage by provoking the degradation of the sub-endothelial matrix proteins (fibronectin, laminin, type IV collagen, nidogen, and gelatins). This Crotalus atrox (Western diamondback rattlesnake) protein is Snake venom metalloproteinase atrolysin-D.